Reading from the N-terminus, the 424-residue chain is Glucose-1-phosphate adenylyltransferase (424 aa).

Residues tyrosine 112, glycine 177, glutamate 192–lysine 193, and serine 210 each bind alpha-D-glucose 1-phosphate.

It belongs to the bacterial/plant glucose-1-phosphate adenylyltransferase family. Homotetramer.

It catalyses the reaction alpha-D-glucose 1-phosphate + ATP + H(+) = ADP-alpha-D-glucose + diphosphate. Its pathway is glycan biosynthesis; glycogen biosynthesis. Involved in the biosynthesis of ADP-glucose, a building block required for the elongation reactions to produce glycogen. Catalyzes the reaction between ATP and alpha-D-glucose 1-phosphate (G1P) to produce pyrophosphate and ADP-Glc. The polypeptide is Glucose-1-phosphate adenylyltransferase (Methylococcus capsulatus (strain ATCC 33009 / NCIMB 11132 / Bath)).